We begin with the raw amino-acid sequence, 453 residues long: CBL-interacting protein kinase 24 (453 aa).

The Protein kinase domain maps to 18-271; it reads YEVGRTIGQG…IEQIREDTWF (254 aa). Residues 24–32 and K47 each bind ATP; that span reads IGQGTFAKV. D141 serves as the catalytic Proton acceptor. Residues 159–186 form an activation loop region; sequence DFGLSTLAQKGVGLLHTTCGTPNYVAPE. One can recognise an NAF domain in the interval 310–336; sequence NDGGPLVMNAFEMITLSQGLDLSALFD. The interval 343-372 is PPI; it reads KRQTRFVSRKPAKTIVATIEVVAETMGLKV.

This sequence belongs to the protein kinase superfamily. CAMK Ser/Thr protein kinase family. SNF1 subfamily. In terms of assembly, interacts with CBL4. Requires Mn(2+) as cofactor.

The enzyme catalyses L-seryl-[protein] + ATP = O-phospho-L-seryl-[protein] + ADP + H(+). It catalyses the reaction L-threonyl-[protein] + ATP = O-phospho-L-threonyl-[protein] + ADP + H(+). Its function is as follows. Involved in the regulatory pathway for the control of intracellular Na(+) and K(+) homeostasis and salt tolerance. Operates in synergy with CBL4 to activate the plasma membrane Na(+)/H(+) antiporter SOS1. CIPK serine-threonine protein kinases interact with CBL proteins. Binding of a CBL protein to the regulatory NAF domain of CIPK protein lead to the activation of the kinase in a calcium-dependent manner. This chain is CBL-interacting protein kinase 24 (CIPK24), found in Oryza sativa subsp. japonica (Rice).